Reading from the N-terminus, the 710-residue chain is WD repeat-containing protein CG11141 (710 aa).

WD repeat units follow at residues 31-70 and 133-172; these read FFPA…MQKL and LHKC…HLSK. Residues 283–307 are disordered; it reads LNPKQRSEPSGTHHTSASTSSTRHS. Residues 292–307 show a composition bias toward low complexity; it reads SGTHHTSASTSSTRHS. The residue at position 488 (T488) is a Phosphothreonine. S553 carries the phosphoserine modification. 2 disordered regions span residues 612–635 and 685–710; these read ASIQ…GEPV and DPLA…FLDN. 2 stretches are compositionally biased toward polar residues: residues 613 to 624 and 694 to 704; these read SIQTSSRENATN and PATSDSNTSSE.

This sequence belongs to the WD repeat KIAA0329 family.

This Drosophila melanogaster (Fruit fly) protein is WD repeat-containing protein CG11141.